A 166-amino-acid chain; its full sequence is UPF0336 protein ML1908 (166 aa).

Belongs to the UPF0336 family.

This is UPF0336 protein ML1908 from Mycobacterium leprae (strain TN).